A 512-amino-acid chain; its full sequence is ATP synthase subunit alpha 2 (512 aa).

169–176 serves as a coordination point for ATP; it reads GDRQTGKT.

This sequence belongs to the ATPase alpha/beta chains family. As to quaternary structure, F-type ATPases have 2 components, CF(1) - the catalytic core - and CF(0) - the membrane proton channel. CF(1) has five subunits: alpha(3), beta(3), gamma(1), delta(1), epsilon(1). CF(0) has four main subunits: a(1), b(1), b'(1) and c(9-12).

The protein resides in the cell inner membrane. It carries out the reaction ATP + H2O + 4 H(+)(in) = ADP + phosphate + 5 H(+)(out). In terms of biological role, produces ATP from ADP in the presence of a proton gradient across the membrane. The alpha chain is a regulatory subunit. The chain is ATP synthase subunit alpha 2 from Dinoroseobacter shibae (strain DSM 16493 / NCIMB 14021 / DFL 12).